Reading from the N-terminus, the 166-residue chain is Large ribosomal subunit protein bL9 (166 aa).

It belongs to the bacterial ribosomal protein bL9 family.

In terms of biological role, binds to the 23S rRNA. The chain is Large ribosomal subunit protein bL9 from Brachyspira hyodysenteriae (strain ATCC 49526 / WA1).